Reading from the N-terminus, the 425-residue chain is Acyl-lipid (8-3)-desaturase (425 aa).

The segment at 1-25 (MPPRDSYSYAAPPSAQLHEVDTPQE) is disordered. The Cytochrome b5 heme-binding domain occupies 18–93 (HEVDTPQEHD…SRPVHKGYSP (76 aa)). His-47 and His-69 together coordinate heme. A helical membrane pass occupies residues 134–154 (VAGAALIWHGYTFAGIAMLGV). A Histidine box-1 motif is present at residues 164–168 (HEGGH). The chain crosses the membrane as a helical span at residues 175-197 (IAFDRAIQVACYGLGCGMSGAWW). The Histidine box-2 signature appears at 201–206 (HNKHHA). Helical transmembrane passes span 241-261 (WLSMQAKLFAPVTTLLVALGW) and 297-317 (GAGYVLACYLLYVQLGAMYIF). Residues 365 to 369 (QIEHH) carry the Histidine box-3 motif.

Belongs to the fatty acid desaturase type 1 family. Requires Fe(2+) as cofactor.

It is found in the membrane. The enzyme catalyses an (8Z,11Z,14Z)-icosatrienoyl-containing glycerolipid + 2 Fe(II)-[cytochrome b5] + O2 + 2 H(+) = (5Z,8Z,11Z,14Z)-eicosatetraenoyl-containing glycerolipid + 2 Fe(III)-[cytochrome b5] + 2 H2O. The catalysed reaction is an (8Z,11Z,14Z,17Z)-eicosatetraenoyl-containing glycerolipid + 2 Fe(II)-[cytochrome b5] + O2 + 2 H(+) = a (5Z,8Z,11Z,14Z,17Z)-eicosapentaenoyl-containing glycerolipid + 2 Fe(III)-[cytochrome b5] + 2 H2O. In terms of biological role, fatty acid desaturase that introduces a cis double bond at the 5-position in 20-carbon polyunsaturated fatty acids incorporated in a glycerolipid that contain a Delta(8) double bond. The protein is Acyl-lipid (8-3)-desaturase of Rebecca salina (Marine microalga).